Reading from the N-terminus, the 74-residue chain is Exodeoxyribonuclease 7 small subunit (74 aa).

It belongs to the XseB family. As to quaternary structure, heterooligomer composed of large and small subunits.

The protein localises to the cytoplasm. It catalyses the reaction Exonucleolytic cleavage in either 5'- to 3'- or 3'- to 5'-direction to yield nucleoside 5'-phosphates.. Functionally, bidirectionally degrades single-stranded DNA into large acid-insoluble oligonucleotides, which are then degraded further into small acid-soluble oligonucleotides. The protein is Exodeoxyribonuclease 7 small subunit of Vesicomyosocius okutanii subsp. Calyptogena okutanii (strain HA).